Consider the following 524-residue polypeptide: Probable glutamyl-tRNA reductase 3, chloroplastic (524 aa).

The N-terminal 52 residues, 1–52, are a transit peptide targeting the chloroplast; it reads MAVSNASVVLSPNLETSSSWYHHNPSSSLDLIRIHTLPMNKMTRRGLIQRVR. Substrate contacts are provided by residues 129–132, Ser189, 194–196, and Gln200; these read TCNR and ENQ. Cys130 acts as the Nucleophile in catalysis. Position 269–274 (269–274) interacts with NADP(+); sequence GAGEMG.

It belongs to the glutamyl-tRNA reductase family.

The protein resides in the plastid. The protein localises to the chloroplast. The enzyme catalyses (S)-4-amino-5-oxopentanoate + tRNA(Glu) + NADP(+) = L-glutamyl-tRNA(Glu) + NADPH + H(+). It participates in porphyrin-containing compound metabolism; protoporphyrin-IX biosynthesis; 5-aminolevulinate from L-glutamyl-tRNA(Glu): step 1/2. It functions in the pathway porphyrin-containing compound metabolism; chlorophyll biosynthesis. Its function is as follows. Catalyzes the NADPH-dependent reduction of glutamyl-tRNA(Glu) to glutamate 1-semialdehyde (GSA). In Arabidopsis thaliana (Mouse-ear cress), this protein is Probable glutamyl-tRNA reductase 3, chloroplastic (HEMA3).